The sequence spans 506 residues: 2-isopropylmalate synthase (506 aa).

The Pyruvate carboxyltransferase domain occupies 4-266; it reads ILFMDTTLRD…EPSMTLKEIK (263 aa). Mn(2+) contacts are provided by Asp13, His201, His203, and Asn237. Residues 390–506 are regulatory domain; sequence NITQLQVHFV…KLKSFIQLVK (117 aa).

The protein belongs to the alpha-IPM synthase/homocitrate synthase family. LeuA type 1 subfamily. In terms of assembly, homodimer. Requires Mn(2+) as cofactor.

It localises to the cytoplasm. It catalyses the reaction 3-methyl-2-oxobutanoate + acetyl-CoA + H2O = (2S)-2-isopropylmalate + CoA + H(+). It functions in the pathway amino-acid biosynthesis; L-leucine biosynthesis; L-leucine from 3-methyl-2-oxobutanoate: step 1/4. In terms of biological role, catalyzes the condensation of the acetyl group of acetyl-CoA with 3-methyl-2-oxobutanoate (2-ketoisovalerate) to form 3-carboxy-3-hydroxy-4-methylpentanoate (2-isopropylmalate). This chain is 2-isopropylmalate synthase, found in Bacillus cereus (strain ZK / E33L).